Here is a 508-residue protein sequence, read N- to C-terminus: Photosystem II CP47 reaction center protein (508 aa).

6 helical membrane-spanning segments follow: residues 21-36 (SVHI…WAGS), 101-115 (IVFS…IWHW), 140-156 (GIHL…FGAF), 203-218 (IAAG…FHLS), 237-252 (VLSS…AFIV), and 457-472 (SFAL…HGAR).

The protein belongs to the PsbB/PsbC family. PsbB subfamily. PSII is composed of 1 copy each of membrane proteins PsbA, PsbB, PsbC, PsbD, PsbE, PsbF, PsbH, PsbI, PsbJ, PsbK, PsbL, PsbM, PsbT, PsbX, PsbY, PsbZ, Psb30/Ycf12, at least 3 peripheral proteins of the oxygen-evolving complex and a large number of cofactors. It forms dimeric complexes. The cofactor is Binds multiple chlorophylls. PSII binds additional chlorophylls, carotenoids and specific lipids..

It is found in the plastid. The protein localises to the chloroplast thylakoid membrane. Its function is as follows. One of the components of the core complex of photosystem II (PSII). It binds chlorophyll and helps catalyze the primary light-induced photochemical processes of PSII. PSII is a light-driven water:plastoquinone oxidoreductase, using light energy to abstract electrons from H(2)O, generating O(2) and a proton gradient subsequently used for ATP formation. The protein is Photosystem II CP47 reaction center protein of Amborella trichopoda.